Reading from the N-terminus, the 127-residue chain is Fluoride-specific ion channel FluC (127 aa).

Transmembrane regions (helical) follow at residues 4–24, 36–56, 68–88, and 99–119; these read SILAIALGAALGALLRWFLGL, GTLLANLVGGYVIGAAIAYFA, LIITGFCGGLTTFSTFSAEVV, and AAGAIATHVSGSLLMTLLGLF. Positions 75 and 78 each coordinate Na(+).

The protein belongs to the fluoride channel Fluc/FEX (TC 1.A.43) family.

The protein localises to the cell inner membrane. It carries out the reaction fluoride(in) = fluoride(out). Its activity is regulated as follows. Na(+) is not transported, but it plays an essential structural role and its presence is essential for fluoride channel function. Its function is as follows. Fluoride-specific ion channel. Important for reducing fluoride concentration in the cell, thus reducing its toxicity. This Pseudomonas aeruginosa (strain UCBPP-PA14) protein is Fluoride-specific ion channel FluC.